Reading from the N-terminus, the 526-residue chain is piRNA biogenesis factor prde-1 (526 aa).

The disordered stretch occupies residues 436-526; sequence EAKEEPIDKK…RRRGCEIRRK (91 aa). Residues 439 to 448 show a composition bias toward basic and acidic residues; that stretch reads EEPIDKKKDP. The segment covering 458 to 467 has biased composition (basic residues); it reads GKKRRGRKPK. Positions 468–487 are enriched in basic and acidic residues; sequence KKDDPKMELKDEVKDLKDFV. The span at 489–498 shows a compositional bias: low complexity; it reads EESTSASSSA.

In terms of tissue distribution, expressed in male and female germ cells.

Its subcellular location is the nucleus. The protein localises to the chromosome. In terms of biological role, nuclear factor required for the production of piwi-interacting RNA (piRNA) precursors. Specifically required for piRNAs produced from loci associated with the Ruby motif. Promotes binding of the transcription factor snpc-4 at piRNA genomic clusters. Required for normal fertility. The chain is piRNA biogenesis factor prde-1 from Caenorhabditis elegans.